A 139-amino-acid polypeptide reads, in one-letter code: Arsenate reductase (139 aa).

Residues C10, C82, and C89 each act as nucleophile in the active site. Disulfide bonds link C10/C82 and C82/C89.

The protein belongs to the low molecular weight phosphotyrosine protein phosphatase family. Thioredoxin-coupled ArsC subfamily. In terms of assembly, monomer.

It localises to the cytoplasm. It carries out the reaction arsenate + [thioredoxin]-dithiol + H(+) = arsenite + [thioredoxin]-disulfide + H2O. Activity is potassium and sulfate-independent. Catalyzes the reduction of arsenate [As(V)] to arsenite [As(III)]. In vitro, can dephosphorylate para-nitrophenyl phosphate (pNPP). This is Arsenate reductase from Bacillus subtilis (strain 168).